The primary structure comprises 430 residues: Dihydroorotase (430 aa).

2 residues coordinate Zn(2+): histidine 61 and histidine 63. Substrate contacts are provided by residues 63-65 and asparagine 95; that span reads HLR. Zn(2+)-binding residues include aspartate 153, histidine 180, and histidine 233. Asparagine 279 lines the substrate pocket. Aspartate 306 lines the Zn(2+) pocket. Aspartate 306 is an active-site residue. Residues histidine 310 and 324-325 each bind substrate; that span reads FG.

Belongs to the metallo-dependent hydrolases superfamily. DHOase family. Class I DHOase subfamily. The cofactor is Zn(2+).

It carries out the reaction (S)-dihydroorotate + H2O = N-carbamoyl-L-aspartate + H(+). It functions in the pathway pyrimidine metabolism; UMP biosynthesis via de novo pathway; (S)-dihydroorotate from bicarbonate: step 3/3. Catalyzes the reversible cyclization of carbamoyl aspartate to dihydroorotate. This Lactiplantibacillus plantarum (strain ATCC BAA-793 / NCIMB 8826 / WCFS1) (Lactobacillus plantarum) protein is Dihydroorotase.